Reading from the N-terminus, the 195-residue chain is Putative NADH dehydrogenase/NAD(P)H nitroreductase Caul_0018 (195 aa).

The protein belongs to the nitroreductase family. HadB/RutE subfamily. FMN serves as cofactor.

The sequence is that of Putative NADH dehydrogenase/NAD(P)H nitroreductase Caul_0018 from Caulobacter sp. (strain K31).